Consider the following 649-residue polypeptide: Quinol oxidase subunit 1 (649 aa).

At 1-15 (MKFKWDEFFVTGDPL) the chain is on the extracellular side. Residues 16–34 (ILGAQVSIALSTIAIIFVL) form a helical membrane-spanning segment. Residues 35–56 (TYFKKWKWLWSEWITTVDHKKL) are Cytoplasmic-facing. A helical membrane pass occupies residues 57–75 (GIMYIISAVIMLFRGGVDG). Over 76–97 (LMMRAQLALPNNSFLDSNHYNE) the chain is Extracellular. The chain crosses the membrane as a helical span at residues 98-117 (IFTTHGTIMIIFMAMPFLIG). Position 102 (His102) interacts with Fe(II)-heme a. At 118–139 (LINVVVPLQIGARDVAFPYLNN) the chain is on the cytoplasmic side. The chain crosses the membrane as a helical span at residues 140–157 (LSFWTFFVGAMLFNISFV). Residues 158–190 (IGGSPNAGWTSYMPLASNDMSPGPGENYYLLGL) lie on the Extracellular side of the membrane. The helical transmembrane segment at 191–209 (QIAGIGTLMTGINFMVTIL) threads the bilayer. Over 210–227 (KMRTKGMTLMRMPMFTWT) the chain is Cytoplasmic. The helical transmembrane segment at 228–246 (TLITMVIIVFAFPVLTVAL) threads the bilayer. Residues 247-272 (ALLSFDRLFGAHFFTLEAGGMPMLWA) are Extracellular-facing. Residues 273–292 (NLFWIWGHPEVYIVILPAFG) traverse the membrane as a helical segment. Cu cation is bound by residues His280 and Tyr284. A cross-link (1'-histidyl-3'-tyrosine (His-Tyr)) is located at residues 280–284 (HPEVY). Over 293–315 (IFSEIISSFARKQLFGYKAMVGS) the chain is Cytoplasmic. The helical transmembrane segment at 316 to 335 (IIAISVLSFLVWTHHFFTMG) threads the bilayer. Residues His329 and His330 each coordinate Cu cation. The Extracellular portion of the chain corresponds to 336 to 343 (NSASVNSF). Residues 344–362 (FSITTMAISIPTGVKIFNW) traverse the membrane as a helical segment. Topologically, residues 363 to 377 (LFTMYKGRISFTTPM) are cytoplasmic. Residues 378–397 (LWALAFIPNFVIGGVTGVML) form a helical membrane-spanning segment. Topologically, residues 398-405 (AMAAADYQ) are extracellular. The helical transmembrane segment at 406–425 (YHNTYFLVSHFHYVLIAGTV) threads the bilayer. His415 lines the heme a3 pocket. Fe(II)-heme a is bound at residue His417. At 426–452 (FACFAGFIFWYPKMFGHKLNERIGKWF) the chain is on the cytoplasmic side. A helical membrane pass occupies residues 453 to 472 (FWIFMIGFNICFFPQYFLGL). The Extracellular segment spans residues 473-490 (QGMPRRIYTYGPNDGWTT). A helical transmembrane segment spans residues 491–510 (LNFISTVGAFMMGVGFLILC). Residues 511–584 (YNIYYSFRYS…SKFKKIHMPS (74 aa)) lie on the Cytoplasmic side of the membrane. The chain crosses the membrane as a helical span at residues 585 to 604 (NSGRPFFMSVAFGLAGFGLV). At 605–610 (FEWYWM) the chain is on the extracellular side. Residues 611 to 631 (GVVGLIGVLLCMVLRSFEYDN) form a helical membrane-spanning segment. Residues 632 to 649 (GYYISVDEIKETERKISE) are Cytoplasmic-facing.

This sequence belongs to the heme-copper respiratory oxidase family. The cofactor is Cu cation. It depends on ferriheme a as a cofactor. Heme A3. is required as a cofactor.

The protein resides in the cell membrane. The enzyme catalyses 2 a quinol + O2 = 2 a quinone + 2 H2O. Its pathway is energy metabolism; oxidative phosphorylation. Catalyzes quinol oxidation with the concomitant reduction of oxygen to water. Major component for energy conversion during vegetative growth. The chain is Quinol oxidase subunit 1 (qoxB) from Bacillus subtilis (strain 168).